Here is a 126-residue protein sequence, read N- to C-terminus: Glycine cleavage system H protein (126 aa).

The Lipoyl-binding domain occupies Thr21–Lys103. N6-lipoyllysine is present on Lys62.

This sequence belongs to the GcvH family. As to quaternary structure, the glycine cleavage system is composed of four proteins: P, T, L and H. The cofactor is (R)-lipoate.

In terms of biological role, the glycine cleavage system catalyzes the degradation of glycine. The H protein shuttles the methylamine group of glycine from the P protein to the T protein. This chain is Glycine cleavage system H protein, found in Vibrio vulnificus (strain CMCP6).